Consider the following 227-residue polypeptide: Lipoprotein-releasing system ATP-binding protein LolD (227 aa).

The ABC transporter domain maps to 7–227 (LQLTGVERHY…TISDGKIVDF (221 aa)). Position 43–50 (43–50 (APSGTGKS)) interacts with ATP.

Belongs to the ABC transporter superfamily. Lipoprotein translocase (TC 3.A.1.125) family. As to quaternary structure, the complex is composed of two ATP-binding proteins (LolD) and two transmembrane proteins (LolC and LolE).

It localises to the cell inner membrane. Part of the ABC transporter complex LolCDE involved in the translocation of mature outer membrane-directed lipoproteins, from the inner membrane to the periplasmic chaperone, LolA. Responsible for the formation of the LolA-lipoprotein complex in an ATP-dependent manner. This Rhizobium johnstonii (strain DSM 114642 / LMG 32736 / 3841) (Rhizobium leguminosarum bv. viciae) protein is Lipoprotein-releasing system ATP-binding protein LolD.